Reading from the N-terminus, the 151-residue chain is D-aminoacyl-tRNA deacylase (151 aa).

A Gly-cisPro motif, important for rejection of L-amino acids motif is present at residues 136 to 137 (GP).

This sequence belongs to the DTD family. As to quaternary structure, homodimer.

It is found in the cytoplasm. It carries out the reaction glycyl-tRNA(Ala) + H2O = tRNA(Ala) + glycine + H(+). The catalysed reaction is a D-aminoacyl-tRNA + H2O = a tRNA + a D-alpha-amino acid + H(+). An aminoacyl-tRNA editing enzyme that deacylates mischarged D-aminoacyl-tRNAs. Also deacylates mischarged glycyl-tRNA(Ala), protecting cells against glycine mischarging by AlaRS. Acts via tRNA-based rather than protein-based catalysis; rejects L-amino acids rather than detecting D-amino acids in the active site. By recycling D-aminoacyl-tRNA to D-amino acids and free tRNA molecules, this enzyme counteracts the toxicity associated with the formation of D-aminoacyl-tRNA entities in vivo and helps enforce protein L-homochirality. The protein is D-aminoacyl-tRNA deacylase of Lactococcus lactis subsp. cremoris (strain SK11).